The following is a 416-amino-acid chain: Multifunctional CCA protein (416 aa).

2 residues coordinate ATP: Gly8 and Arg11. CTP-binding residues include Gly8 and Arg11. Mg(2+) contacts are provided by Asp21 and Asp23. 3 residues coordinate ATP: Arg91, Arg137, and Arg140. CTP-binding residues include Arg91, Arg137, and Arg140. In terms of domain architecture, HD spans 228–329 (TGLHTMMVLA…IKLFDKADFW (102 aa)).

This sequence belongs to the tRNA nucleotidyltransferase/poly(A) polymerase family. Bacterial CCA-adding enzyme type 1 subfamily. Monomer. Can also form homodimers and oligomers. The cofactor is Mg(2+). Ni(2+) is required as a cofactor.

The enzyme catalyses a tRNA precursor + 2 CTP + ATP = a tRNA with a 3' CCA end + 3 diphosphate. The catalysed reaction is a tRNA with a 3' CCA end + 2 CTP + ATP = a tRNA with a 3' CCACCA end + 3 diphosphate. Functionally, catalyzes the addition and repair of the essential 3'-terminal CCA sequence in tRNAs without using a nucleic acid template. Adds these three nucleotides in the order of C, C, and A to the tRNA nucleotide-73, using CTP and ATP as substrates and producing inorganic pyrophosphate. tRNA 3'-terminal CCA addition is required both for tRNA processing and repair. Also involved in tRNA surveillance by mediating tandem CCA addition to generate a CCACCA at the 3' terminus of unstable tRNAs. While stable tRNAs receive only 3'-terminal CCA, unstable tRNAs are marked with CCACCA and rapidly degraded. This Shewanella sp. (strain MR-7) protein is Multifunctional CCA protein.